The primary structure comprises 568 residues: Glucose-6-phosphate isomerase, cytosolic (568 aa).

Residue Glu-360 is the Proton donor of the active site. Residues His-391 and Lys-516 contribute to the active site.

The protein belongs to the GPI family. Homodimer.

It localises to the cytoplasm. The enzyme catalyses alpha-D-glucose 6-phosphate = beta-D-fructose 6-phosphate. The protein operates within carbohydrate degradation; glycolysis; D-glyceraldehyde 3-phosphate and glycerone phosphate from D-glucose: step 2/4. This chain is Glucose-6-phosphate isomerase, cytosolic (PGIC), found in Oenothera sinuata var. hirsuta (Mexican evening primrose).